The primary structure comprises 409 residues: Microfibrillar-associated protein 3-like (409 aa).

The first 28 residues, 1–28 (MDRLKSHLTVCFLPSVPFLILVSTLATA), serve as a signal peptide directing secretion. The Extracellular portion of the chain corresponds to 29–149 (KSVTNSTLNG…LRVIFTSGDM (121 aa)). Asn33, Asn37, Asn67, Asn111, and Asn135 each carry an N-linked (GlcNAc...) asparagine glycan. An Ig-like C2-type domain is found at 47 to 141 (PVIIARTDHI…GTVNNTVTLR (95 aa)). Cys68 and Cys125 are oxidised to a cystine. Residues 150 to 172 (GVYYMVVCLVAFTIVMVLNITRL) form a helical membrane-spanning segment. Topologically, residues 173-409 (CMMSSHLKKT…NTCIIYESHV (237 aa)) are cytoplasmic. Tyr287 is modified (phosphotyrosine; by EGFR). 2 disordered regions span residues 292–311 (SLKR…LHEQ) and 320–385 (SVHP…VLPP). Phosphoserine is present on residues Ser298, Ser303, Ser306, and Ser307. The segment covering 339–355 (EVKDVEETELSAEHSPE) has biased composition (basic and acidic residues). The span at 363 to 377 (VTSTELTSEEPTPVE) shows a compositional bias: low complexity.

As to expression, highly expressed in testis.

Its subcellular location is the cell membrane. The protein resides in the nucleus. The protein localises to the cytoplasm. May participate in the nuclear signaling of EGFR and MAPK1/ERK2. May a have a role in metastasis. This is Microfibrillar-associated protein 3-like (MFAP3L) from Homo sapiens (Human).